Consider the following 194-residue polypeptide: ATP synthase subunit 5, mitochondrial (194 aa).

F-type ATP synthases have 2 components, the catalytic core F(1) and the membrane-embedded component F(0), linked together by a central stalk and a peripheral stalk. The central stalk, also called rotor shaft, is often seen as part of F(1). The peripheral stalk is seen as part of F(0). F(0) contains the membrane channel next to the rotor. F-type ATP synthases form dimers but each monomer functions independently in ATP generation. The dimer consists of 18 different polypeptides: ATP1 (subunit alpha, part of F(1), 3 molecules per monomer), ATP2 (subunit beta, part of F(1), 3 molecules per monomer), ATP3 (subunit gamma, part of the central stalk), ATP4 (subunit b, part of the peripheral stalk), ATP5/OSCP (subunit 5/OSCP, part of the peripheral stalk), ATP6 (subunit a, part of the peripheral stalk), ATP7 (subunit d, part of the peripheral stalk), ATP8 (subunit 8, part of the peripheral stalk), OLI1 (subunit c, part of the rotor, 10 molecules per monomer), ATP14 (subunit h, part of the peripheral stalk), ATP15 (subunit epsilon, part of the central stalk), ATP16 (subunit delta, part of the central stalk), ATP17 (subunit f, part of the peripheral stalk), ATP18 (subunit i/j, part of the peripheral stalk). Dimer-specific subunits are ATP19 (subunit k, at interface between monomers), ATP20 (subunit g, at interface between monomers), TIM11 (subunit e, at interface between monomers). Also contains subunit L.

The protein resides in the mitochondrion inner membrane. Functionally, mitochondrial membrane ATP synthase (F(1)F(0) ATP synthase or Complex V) produces ATP from ADP in the presence of a proton gradient across the membrane which is generated by electron transport complexes of the respiratory chain. F-type ATP synthases consist of two structural domains, F(1) - containing the extramembraneous catalytic core, and F(0) - containing the membrane proton channel, linked together by a central stalk and a peripheral stalk. During catalysis, ATP synthesis in the catalytic domain of F(1) is coupled via a rotary mechanism of the central stalk subunits to proton translocation. Part of the complex F(0) domain and the peripheral stalk, which acts as a stator to hold the catalytic alpha/ATP1(3)beta/ATP2(3) subcomplex and subunit a/ATP6 static relative to the rotary elements. The chain is ATP synthase subunit 5, mitochondrial from Pichia angusta (Yeast).